Reading from the N-terminus, the 271-residue chain is Mannosyl-3-phosphoglycerate phosphatase (271 aa).

The active-site Nucleophile is the aspartate 13. Residues aspartate 13, aspartate 15, and aspartate 214 each coordinate Mg(2+).

It belongs to the HAD-like hydrolase superfamily. MPGP family. It depends on Mg(2+) as a cofactor.

It is found in the cytoplasm. It catalyses the reaction 2-O-(alpha-D-mannosyl)-3-phosphoglycerate + H2O = (2R)-2-O-(alpha-D-mannosyl)-glycerate + phosphate. The polypeptide is Mannosyl-3-phosphoglycerate phosphatase (Escherichia coli O139:H28 (strain E24377A / ETEC)).